A 155-amino-acid polypeptide reads, in one-letter code: Small ribosomal subunit protein uS7cz/uS7cy (155 aa).

As to quaternary structure, component of the chloroplast small ribosomal subunit (SSU). Mature 70S chloroplast ribosomes of higher plants consist of a small (30S) and a large (50S) subunit. The 30S small subunit contains 1 molecule of ribosomal RNA (16S rRNA) and 24 different proteins. The 50S large subunit contains 3 rRNA molecules (23S, 5S and 4.5S rRNA) and 33 different proteins.

Its subcellular location is the plastid. The protein resides in the chloroplast. In terms of biological role, component of the chloroplast ribosome (chloro-ribosome), a dedicated translation machinery responsible for the synthesis of chloroplast genome-encoded proteins, including proteins of the transcription and translation machinery and components of the photosynthetic apparatus. In Spinacia oleracea (Spinach), this protein is Small ribosomal subunit protein uS7cz/uS7cy (rps7-A).